Reading from the N-terminus, the 554-residue chain is Formate--tetrahydrofolate ligase (554 aa).

Position 64–71 (64–71 (TPAGEGKS)) interacts with ATP.

Belongs to the formate--tetrahydrofolate ligase family.

It carries out the reaction (6S)-5,6,7,8-tetrahydrofolate + formate + ATP = (6R)-10-formyltetrahydrofolate + ADP + phosphate. It participates in one-carbon metabolism; tetrahydrofolate interconversion. The protein is Formate--tetrahydrofolate ligase of Leuconostoc citreum (strain KM20).